We begin with the raw amino-acid sequence, 458 residues long: Retinoic acid receptor gamma (458 aa).

The segment at 1 to 89 (MATNKERLFA…PPPPPRVYKP (89 aa)) is modulating. Arg34 is modified (omega-N-methylarginine). Residues 58–83 (MASLSVETQSTSSEEMVPSSPSPPPP) form a disordered region. Over residues 62 to 71 (SVETQSTSSE) the composition is skewed to polar residues. 2 NR C4-type zinc fingers span residues 90-110 (CFVC…CEGC) and 126-150 (CHRD…LQKC). The segment at residues 90–155 (CFVCNDKSSG…RLQKCFEVGM (66 aa)) is a DNA-binding region (nuclear receptor). Residues 156–184 (SKEAVRNDRNKKKKEVKEEGSPDSYELSP) are hinge. Residues 161-180 (RNDRNKKKKEVKEEGSPDSY) are disordered. Residues Lys172 and Lys401 each participate in a glycyl lysine isopeptide (Lys-Gly) (interchain with G-Cter in SUMO2) cross-link. Positions 185 to 419 (QLEELITKVS…PLIREMLENP (235 aa)) constitute an NR LBD domain. The interval 409–458 (PPLIREMLENPEMFEDDSSKPGPHPKASSEDEAPGGQGKRGQSPQPDQGP) is disordered. Over residues 448-458 (RGQSPQPDQGP) the composition is skewed to polar residues.

It belongs to the nuclear hormone receptor family. NR1 subfamily. As to quaternary structure, homodimer. Heterodimer with a RXR molecule. Binds DNA preferentially as a RAR/RXR heterodimer. Forms a complex with PUS1 and the SRA1 RNA in the nucleus.

It localises to the nucleus. It is found in the cytoplasm. Receptor for retinoic acid. Retinoic acid receptors bind as heterodimers to their target response elements in response to their ligands, all-trans or 9-cis retinoic acid, and regulate gene expression in various biological processes. The RAR/RXR heterodimers bind to the retinoic acid response elements (RARE) composed of tandem 5'-AGGTCA-3' sites known as DR1-DR5. In the absence of ligand, acts mainly as an activator of gene expression due to weak binding to corepressors. Required for limb bud development. In concert with RARA or RARB, required for skeletal growth, matrix homeostasis and growth plate function. The protein is Retinoic acid receptor gamma (Rarg) of Mus musculus (Mouse).